The chain runs to 614 residues: MAPAAVAAAEAGSKAAAVAGKAVAACERDAEKLEFIEEMTRGFDAVQERVLAAILARNNGAEYLRRHGMEGRTDREAFKARVPVVTYEDLRPEIERIANGDRSNIISSHPITEFLTSSGTSAGERKLMPTIEDELDRRQMLYSLLMPVMNLYVPGLDKGKGLYFLFIKSETKTPGGLPARPVLTSYYKSDHFKHRPFDPYNVYTSPTAAILCTDAFQSMYAQMLCGLVARAEVLRVGAVFASGLLRAIRFLQLHWRELAHDIRTGTLSAKVTEPSIRDAVAEVLAAPDAELAAFVEAECGKDKWEGIITRMWPNTKYLDVIVTGAMAQYIPTLKFYSGGLPMACTMYASSECYFGLNLRPMCDPSEVSYTIMPNMGYFELMPHDPDAPPLPRDAPPPRLVDLADAEVGREYELVITTYAGLCRYRVGDILQVTGFHNAAPQFRFVRRKNVLLSIDSDKTDEAELQAAVERASALLSPYGASIVEYTSQADATTIPGHYVVYWELMVREGGAWPPPAEEEGRGVFERCCLEMEEALNAVYRQGRNGEAIGPLEIRVVRAGTFEEVMDYAISRGASINQYKAPRCVSFGPIIELLNSRVISKHFSPACPKYSPHKK.

It belongs to the IAA-amido conjugating enzyme family. Expressed in roots, flowers and callus.

Its function is as follows. May catalyze the synthesis of indole-3-acetic acid (IAA)-amino acid conjugates, providing a mechanism for the plant to cope with the presence of excess auxin. The sequence is that of Probable indole-3-acetic acid-amido synthetase GH3.2 (GH3.2) from Oryza sativa subsp. japonica (Rice).